Reading from the N-terminus, the 271-residue chain is Nodulin-26 (271 aa).

A run of 2 helical transmembrane segments spans residues 40-62 (LVAE…VVNE) and 72-94 (GIAI…ISGG). Positions 97-99 (NPA) match the NPA 1 motif. Transmembrane regions (helical) follow at residues 115-137 (VPAY…RLLF), 152-174 (TNLQ…ICGV), and 181-203 (VGEF…GGPV). The short motif at 209–211 (NPA) is the NPA 2 element. The chain crosses the membrane as a helical span at residues 225-247 (GIWIYLLAPVVGAIAGAWVYNIV). S262 is subject to Phosphoserine; by CPK.

This sequence belongs to the MIP/aquaporin (TC 1.A.8) family. NIP (TC 1.A.8.12) subfamily.

The protein resides in the symbiosome. Its subcellular location is the peribacteroid membrane. Functionally, aquaporins facilitate the transport of water and small neutral solutes across cell membranes. This aquaporin may function in transporting small molecules across the peribacteroid membranes. The protein is Nodulin-26 of Glycine max (Soybean).